A 258-amino-acid polypeptide reads, in one-letter code: Homeobox-leucine zipper protein ATHB-7 (258 aa).

A DNA-binding region (homeobox) is located at residues 29-88 (NKNNQRRFSDEQIKSLEMMFESETRLEPRKKVQLARELGLQPRQVAIWFQNKRARWKSKQ). The leucine-zipper stretch occupies residues 89 to 124 (LETEYNILRQNYDNLASQFESLKKEKQALVSELQRL). The tract at residues 149-183 (SSTHHESENEENRRRKPEEVRPEMEMKDDKGHHGV) is disordered. Residues 151-183 (THHESENEENRRRKPEEVRPEMEMKDDKGHHGV) are compositionally biased toward basic and acidic residues.

The protein belongs to the HD-ZIP homeobox family. Class I subfamily. As to quaternary structure, interacts with TBP2 and TFIIB1. In terms of tissue distribution, widely expressed.

Its subcellular location is the nucleus. Its function is as follows. Probable transcription activator that may act as growth regulators in response to water deficit. The protein is Homeobox-leucine zipper protein ATHB-7 (ATHB-7) of Arabidopsis thaliana (Mouse-ear cress).